A 575-amino-acid chain; its full sequence is uncharacterized protein (575 aa).

Positions 1–28 (MSNLLWKSLVVSPAVLGATLLVSSAAIA) are cleaved as a signal peptide. One can recognise an SLH domain in the interval 87–151 (SVSQFSDVQP…DRVNELIATA (65 aa)). Residues 158-196 (KQDLATLQRLQEEFSAELATLRGRVDALEARTAELEANQ) adopt a coiled-coil conformation.

The protein belongs to the OprB family.

This is an uncharacterized protein from Nostoc sp. (strain PCC 7120 / SAG 25.82 / UTEX 2576).